Reading from the N-terminus, the 148-residue chain is Transcriptional repressor NrdR (148 aa).

Residues 3–34 (CPFCHNEDTQVLDTRVSDEGDTIRRRRRCAKC) fold into a zinc finger. The 91-residue stretch at 49-139 (PAIVKKNGSR…VYRSFADIES (91 aa)) folds into the ATP-cone domain.

The protein belongs to the NrdR family. Zn(2+) serves as cofactor.

Functionally, negatively regulates transcription of bacterial ribonucleotide reductase nrd genes and operons by binding to NrdR-boxes. This chain is Transcriptional repressor NrdR, found in Polynucleobacter necessarius subsp. necessarius (strain STIR1).